The chain runs to 190 residues: Natural killer cells antigen CD94 (190 aa).

Topologically, residues 1-10 (MAAFRTTAWR) are cytoplasmic. A helical; Signal-anchor for type II membrane protein membrane pass occupies residues 11–31 (LISGVLGVICLVLMAALGVLL). Over 32–190 (KNSLTKRSVQ…FRYICKQQLI (159 aa)) the chain is Extracellular. Intrachain disulfides connect Cys-69–Cys-81, Cys-72–Cys-83, Cys-100–Cys-185, and Cys-163–Cys-177. In terms of domain architecture, C-type lectin spans 79–186 (YQCNCYFISN…CEKKFRYICK (108 aa)). N-linked (GlcNAc...) asparagine glycans are attached at residues Asn-104 and Asn-144.

Can form disulfide-bonded heterodimer with NKG2 family members KLRC1 and KLRC2. KLRD1-KLRC1 heterodimer interacts with peptide-bound MHC-E-B2M heterotrimeric complex. KLRD1 plays a prominent role in directly interacting with MHC-E. KLRD1-KLRC1 interacts with much higher affinity with peptide-bound MHC-E-B2M than KLRD1-KLRC2. Interacts with the adapter protein TYROBP/DAP12; this interaction is required for cell surface expression and cell activation.

Its subcellular location is the cell membrane. Its function is as follows. Immune receptor involved in self-nonself discrimination. In complex with KLRC1 or KLRC2 on cytotoxic and regulatory lymphocyte subsets, recognizes non-classical major histocompatibility (MHC) class Ib molecule MHC-E loaded with self-peptides derived from the signal sequence of classical MHC class Ia and non-classical MHC class Ib molecules. Enables cytotoxic cells to monitor the expression of MHC class I molecules in healthy cells and to tolerate self. Primarily functions as a ligand binding subunit as it lacks the capacity to signal. KLRD1-KLRC1 acts as an immune inhibitory receptor. Key inhibitory receptor on natural killer (NK) cells that regulates their activation and effector functions. Dominantly counteracts T cell receptor signaling on a subset of memory/effector CD8-positive T cells as part of an antigen-driven response to avoid autoimmunity. On intraepithelial CD8-positive gamma-delta regulatory T cells triggers TGFB1 secretion, which in turn limits the cytotoxic programming of intraepithelial CD8-positive alpha-beta T cells, distinguishing harmless from pathogenic antigens. In MHC-E-rich tumor microenvironment, acts as an immune inhibitory checkpoint and may contribute to progressive loss of effector functions of NK cells and tumor-specific T cells, a state known as cell exhaustion. Upon MHC-E-peptide binding, transmits intracellular signals through KLRC1 immunoreceptor tyrosine-based inhibition motifs (ITIMs) by recruiting INPP5D/SHIP-1 and INPPL1/SHIP-2 tyrosine phosphatases to ITIMs, and ultimately opposing signals transmitted by activating receptors through dephosphorylation of proximal signaling molecules. In terms of biological role, KLRD1-KLRC2 acts as an immune activating receptor. On cytotoxic lymphocyte subsets recognizes MHC-E loaded with signal sequence-derived peptides from non-classical MHC class Ib MHC-G molecules, likely playing a role in the generation and effector functions of adaptive NK cells and in maternal-fetal tolerance during pregnancy. Regulates the effector functions of terminally differentiated cytotoxic lymphocyte subsets, and in particular may play a role in adaptive NK cell response to viral infection. Upon MHC-E-peptide binding, transmits intracellular signals via the adapter protein TYROBP/DAP12, triggering the phosphorylation of proximal signaling molecules and cell activation. This is Natural killer cells antigen CD94 (KLRD1) from Bos taurus (Bovine).